The following is a 201-amino-acid chain: Peptidyl-prolyl cis-trans isomerase FKBP11 (201 aa).

The signal sequence occupies residues 1–27 (MTLSPLLLPLQLLLLLLFSGAVCRAEA). One can recognise a PPIase FKBP-type domain in the interval 57–144 (GDTLHIHYTG…QYDVELIALI (88 aa)). Residues 156-176 (ILPLVGIAMVPALLGLIGYHL) traverse the membrane as a helical segment.

The protein belongs to the FKBP-type PPIase family. Interacts with IFITM5.

It is found in the membrane. It carries out the reaction [protein]-peptidylproline (omega=180) = [protein]-peptidylproline (omega=0). Its function is as follows. PPIases accelerate the folding of proteins during protein synthesis. The polypeptide is Peptidyl-prolyl cis-trans isomerase FKBP11 (Fkbp11) (Mus musculus (Mouse)).